Reading from the N-terminus, the 645-residue chain is Putative palmitoyltransferase ZDHHC13 (645 aa).

A disordered region spans residues 1–73 (MDWSEGDGSH…KSSHPEDSSS (73 aa)). Topologically, residues 1–314 (MDWSEGDGSH…ACLKLLNRYK (314 aa)) are cytoplasmic. Positions 7 to 20 (DGSHSHGHMGDSCH) are enriched in basic and acidic residues. Residues 23-33 (GGGHSHGHGHS) show a composition bias toward basic residues. The segment covering 34–43 (HGGSGFGGFM) has biased composition (gly residues). ANK repeat units lie at residues 104 to 133 (ENVT…VIDQ), 138 to 167 (LNST…DPSL), 171 to 200 (EGYR…EVDL), 204 to 234 (NGQT…SVNA), and 239 to 268 (NRNS…SVDM). A helical transmembrane segment spans residues 315 to 335 (VCLQSVFSVVVVGAFGAILDM). A topological domain (lumenal) is located at residue arginine 336. Residues 337–357 (TESWLLKGILLACIMAVINLA) form a helical membrane-spanning segment. Residues 358–369 (SRQLATVAVRSL) lie on the Cytoplasmic side of the membrane. Residues 370-390 (IPSTGLIASVFWMVVTWVLWF) form a helical membrane-spanning segment. Topologically, residues 391-394 (LPDE) are lumenal. Residues 395–415 (PSAAVQMLFTVNITAVLYYYI) traverse the membrane as a helical segment. At 416-492 (RSCRTDPGHV…NGCIGARNHP (77 aa)) the chain is on the cytoplasmic side. The region spanning 449 to 499 (IFCTSCMMRKPMRANHCFSCNACVAKQDHHSIWINGCIGARNHPFFVLFLV) is the DHHC domain. A helical transmembrane segment spans residues 493–513 (FFVLFLVALNFLCIWMFYGSI). Topologically, residues 514 to 542 (TYWSRHCPLHYSEEGIWGALTALMGCSPW) are lumenal. Residues 543–563 (LLYVFCFVFFHTTWASILLVL) form a helical membrane-spanning segment. Residues 564-645 (QLYQIAFLGL…RDMFSSPDAV (82 aa)) are Cytoplasmic-facing.

The protein belongs to the DHHC palmitoyltransferase family. AKR/ZDHHC17 subfamily.

It is found in the golgi apparatus membrane. The protein resides in the cytoplasmic vesicle membrane. Functionally, putative palmitoyltransferase that could catalyze the addition of palmitate onto various protein substrates. In Danio rerio (Zebrafish), this protein is Putative palmitoyltransferase ZDHHC13.